The chain runs to 139 residues: Transcription antitermination protein NusB (139 aa).

Belongs to the NusB family.

Involved in transcription antitermination. Required for transcription of ribosomal RNA (rRNA) genes. Binds specifically to the boxA antiterminator sequence of the ribosomal RNA (rrn) operons. This Salmonella agona (strain SL483) protein is Transcription antitermination protein NusB.